Reading from the N-terminus, the 321-residue chain is Cytochrome c biogenesis protein CcsA (321 aa).

7 helical membrane-spanning segments follow: residues 9-29 (ILTHISFSTISIVITIHLITL), 44-64 (GMIATFFSITGFLVSRWVSSG), 68-88 (LSNLYESLIFLSWTLYILHTI), 143-163 (MLLSYATLLCGSLLSAALLII), 225-245 (VISLGFTLLTVGILCGAVWAN), 259-273 (TWAFITWTIFAIYLH), and 288-308 (VASIGFLIIWICYFGINLLGI).

This sequence belongs to the CcmF/CycK/Ccl1/NrfE/CcsA family. In terms of assembly, may interact with Ccs1.

The protein resides in the plastid. It is found in the chloroplast thylakoid membrane. In terms of biological role, required during biogenesis of c-type cytochromes (cytochrome c6 and cytochrome f) at the step of heme attachment. This is Cytochrome c biogenesis protein CcsA from Saccharum hybrid (Sugarcane).